The primary structure comprises 280 residues: Large ribosomal subunit protein uL2 (280 aa).

The interval 213-280 (RWKGKRPSVR…RRRTGKKHAR (68 aa)) is disordered. The segment covering 268-280 (IVRRRRTGKKHAR) has biased composition (basic residues).

This sequence belongs to the universal ribosomal protein uL2 family. In terms of assembly, part of the 50S ribosomal subunit. Forms a bridge to the 30S subunit in the 70S ribosome.

In terms of biological role, one of the primary rRNA binding proteins. Required for association of the 30S and 50S subunits to form the 70S ribosome, for tRNA binding and peptide bond formation. It has been suggested to have peptidyltransferase activity; this is somewhat controversial. Makes several contacts with the 16S rRNA in the 70S ribosome. This is Large ribosomal subunit protein uL2 from Mycobacterium leprae (strain Br4923).